The chain runs to 105 residues: Small ribosomal subunit protein uS10 (105 aa).

Belongs to the universal ribosomal protein uS10 family. Part of the 30S ribosomal subunit.

Involved in the binding of tRNA to the ribosomes. In Nitratidesulfovibrio vulgaris (strain DSM 19637 / Miyazaki F) (Desulfovibrio vulgaris), this protein is Small ribosomal subunit protein uS10.